Consider the following 412-residue polypeptide: Mannose-6-phosphate isomerase (412 aa).

Zn(2+) is bound by residues Gln-99, His-101, Glu-126, and His-265. Residue Arg-284 is part of the active site.

It belongs to the mannose-6-phosphate isomerase type 1 family. Requires Zn(2+) as cofactor.

Its subcellular location is the cytoplasm. It localises to the nucleus. It carries out the reaction D-mannose 6-phosphate = D-fructose 6-phosphate. The protein operates within nucleotide-sugar biosynthesis; GDP-alpha-D-mannose biosynthesis; alpha-D-mannose 1-phosphate from D-fructose 6-phosphate: step 1/2. Involved in the synthesis of the GDP-mannose and dolichol-phosphate-mannose required for a number of critical mannosyl transfer reactions. In Schizosaccharomyces pombe (strain 972 / ATCC 24843) (Fission yeast), this protein is Mannose-6-phosphate isomerase (pmi40).